Consider the following 272-residue polypeptide: NH(3)-dependent NAD(+) synthetase (272 aa).

45–52 (GISGGQDS) contacts ATP. D51 serves as a coordination point for Mg(2+). R138 contributes to the deamido-NAD(+) binding site. T158 contributes to the ATP binding site. E163 is a binding site for Mg(2+). 2 residues coordinate deamido-NAD(+): K171 and D178. The ATP site is built by K187 and T209. 258–259 (HK) contributes to the deamido-NAD(+) binding site.

Belongs to the NAD synthetase family. In terms of assembly, homodimer.

It catalyses the reaction deamido-NAD(+) + NH4(+) + ATP = AMP + diphosphate + NAD(+) + H(+). Its pathway is cofactor biosynthesis; NAD(+) biosynthesis; NAD(+) from deamido-NAD(+) (ammonia route): step 1/1. Functionally, catalyzes the ATP-dependent amidation of deamido-NAD to form NAD. Uses ammonia as a nitrogen source. The polypeptide is NH(3)-dependent NAD(+) synthetase (Bacillus cereus (strain Q1)).